Here is a 538-residue protein sequence, read N- to C-terminus: Poly [ADP-ribose] polymerase 2 (538 aa).

The WGR domain occupies 1-94 (MSIINDENGR…RDDEPVPNKY (94 aa)). The segment at 104–133 (RQTEKEVKKEEPEPEPKVDEKNTRGRKKRG) is disordered. The segment covering 105 to 126 (QTEKEVKKEEPEPEPKVDEKNT) has biased composition (basic and acidic residues). Residues 148–285 (VEEVNEKLKE…GSIEASLELK (138 aa)) form the PARP alpha-helical domain. A PARP catalytic domain is found at 309–535 (EPVSEEIAGK…VKVDRLTAKE (227 aa)). The disordered stretch occupies residues 357–381 (QEVPKKRGRKSTKTAAPTVPPPTTK).

It belongs to the ARTD/PARP family.

The protein resides in the nucleus. The enzyme catalyses NAD(+) + (ADP-D-ribosyl)n-acceptor = nicotinamide + (ADP-D-ribosyl)n+1-acceptor + H(+).. It carries out the reaction L-aspartyl-[protein] + NAD(+) = 4-O-(ADP-D-ribosyl)-L-aspartyl-[protein] + nicotinamide. The catalysed reaction is L-glutamyl-[protein] + NAD(+) = 5-O-(ADP-D-ribosyl)-L-glutamyl-[protein] + nicotinamide. With respect to regulation, inhibited by N-(6-oxo-5,6-dihydrophenanthridin-2-yl)-N,N-dimethylacetamide HCl (PJ34), 1,5-dihydroxyisoquinoline (DHQ) and 3-aminobenzamide (3AB). In terms of biological role, poly[ADP-ribose] polymerase modifies various nuclear proteins by poly(ADP-ribosyl)ation, a post-translational modification synthesized after DNA damage that appears as an obligatory step in a detection/signaling pathway leading to the reparation of DNA strand breaks and programmed cell death. This chain is Poly [ADP-ribose] polymerase 2, found in Caenorhabditis elegans.